A 295-amino-acid polypeptide reads, in one-letter code: MTQRTITLIAGPTVSGKSALALQMAQKKNALIINTDSMQVYDVLNILTARPTEADTAIVPHYLYGYVSPALHYSVGQWLCDVRKLLTTFTSKSLIFVGGTGLYFRALLEGLSEIPHISDAVRQKWRLRLDKEGAENLYRQLLRIDAVFAEKISSQDGQRIIRALEVYDVTGKKLSWWQKKKTPPLISPNCSEKILLIPPRQWLYERIHKRLDNMIERGALEEVFAMKKLMLSPFLPAMKAIGMPEFTAYFDGYKSFEDALEMAKTQTRRYAKRQMTWFRNQFDEEWTLISSCEEV.

11–18 (GPTVSGKS) contacts ATP. Position 13–18 (13–18 (TVSGKS)) interacts with substrate. Interaction with substrate tRNA regions lie at residues 36 to 39 (DSMQ) and 158 to 162 (QRIIR).

This sequence belongs to the IPP transferase family. Monomer. It depends on Mg(2+) as a cofactor.

It catalyses the reaction adenosine(37) in tRNA + dimethylallyl diphosphate = N(6)-dimethylallyladenosine(37) in tRNA + diphosphate. Catalyzes the transfer of a dimethylallyl group onto the adenine at position 37 in tRNAs that read codons beginning with uridine, leading to the formation of N6-(dimethylallyl)adenosine (i(6)A). In Bartonella quintana (strain Toulouse) (Rochalimaea quintana), this protein is tRNA dimethylallyltransferase.